The following is a 160-amino-acid chain: Putative pre-16S rRNA nuclease (160 aa).

Belongs to the YqgF nuclease family.

It localises to the cytoplasm. In terms of biological role, could be a nuclease involved in processing of the 5'-end of pre-16S rRNA. This chain is Putative pre-16S rRNA nuclease, found in Chelativorans sp. (strain BNC1).